The primary structure comprises 115 residues: Dolichyl-diphosphooligosaccharide--protein glycosyltransferase subunit DAD1 (115 aa).

Residues 1–31 (MARSTGKDAQALFHSLRSAYAATPTTLKIID) lie on the Cytoplasmic side of the membrane. The helical transmembrane segment at 32 to 52 (LYVGFAVFTALIQVVYMAIVG) threads the bilayer. Topologically, residues 53–55 (SFP) are lumenal. The helical transmembrane segment at 56 to 76 (FNSFLSGVLSCVGTAVLAVCL) threads the bilayer. At 77–94 (RIQVNKDNKEFKDLPPER) the chain is on the cytoplasmic side. A helical membrane pass occupies residues 95 to 115 (AFADFVLCNLVLHLVIMNFLG).

This sequence belongs to the DAD/OST2 family. Component of the oligosaccharyltransferase (OST) complex.

It localises to the endoplasmic reticulum membrane. Its pathway is protein modification; protein glycosylation. Its function is as follows. Subunit of the oligosaccharyl transferase (OST) complex that catalyzes the initial transfer of a defined glycan (Glc(3)Man(9)GlcNAc(2) in eukaryotes) from the lipid carrier dolichol-pyrophosphate to an asparagine residue within an Asn-X-Ser/Thr consensus motif in nascent polypeptide chains, the first step in protein N-glycosylation. N-glycosylation occurs cotranslationally and the complex associates with the Sec61 complex at the channel-forming translocon complex that mediates protein translocation across the endoplasmic reticulum (ER). All subunits are required for a maximal enzyme activity. In Citrus unshiu (Satsuma mandarin), this protein is Dolichyl-diphosphooligosaccharide--protein glycosyltransferase subunit DAD1 (DAD1).